The sequence spans 101 residues: Putative pterin-4-alpha-carbinolamine dehydratase (101 aa).

It belongs to the pterin-4-alpha-carbinolamine dehydratase family.

It catalyses the reaction (4aS,6R)-4a-hydroxy-L-erythro-5,6,7,8-tetrahydrobiopterin = (6R)-L-erythro-6,7-dihydrobiopterin + H2O. This chain is Putative pterin-4-alpha-carbinolamine dehydratase, found in Rhizobium etli (strain ATCC 51251 / DSM 11541 / JCM 21823 / NBRC 15573 / CFN 42).